The following is a 240-amino-acid chain: Ribonuclease HII (240 aa).

An RNase H type-2 domain is found at 27–226; it reads GPVAGVDEAG…GETRSLRLED (200 aa). Positions 33, 34, and 127 each coordinate a divalent metal cation.

Belongs to the RNase HII family. Mn(2+) serves as cofactor. The cofactor is Mg(2+).

The protein localises to the cytoplasm. It catalyses the reaction Endonucleolytic cleavage to 5'-phosphomonoester.. Functionally, endonuclease that specifically degrades the RNA of RNA-DNA hybrids. This chain is Ribonuclease HII, found in Parafrankia sp. (strain EAN1pec).